The primary structure comprises 168 residues: Transcription elongation factor GreB (168 aa).

It belongs to the GreA/GreB family. GreB subfamily.

Its function is as follows. Necessary for efficient RNA polymerase transcription elongation past template-encoded arresting sites. The arresting sites in DNA have the property of trapping a certain fraction of elongating RNA polymerases that pass through, resulting in locked ternary complexes. Cleavage of the nascent transcript by cleavage factors such as GreA or GreB allows the resumption of elongation from the new 3'terminus. GreB releases sequences of up to 9 nucleotides in length. In Xanthomonas axonopodis pv. citri (strain 306), this protein is Transcription elongation factor GreB.